We begin with the raw amino-acid sequence, 319 residues long: Protoheme IX farnesyltransferase (319 aa).

The next 9 membrane-spanning stretches (helical) occupy residues 34-54 (VMSL…GHIN), 55-75 (PVLG…SGAL), 95-115 (IPAG…LSGF), 119-139 (ILGL…IFFY), 155-175 (IVIG…CVTG), 182-202 (VVLF…LALF), 221-241 (VPTT…IGVV), 244-264 (FMGF…VIFV), and 291-311 (IFYL…AVLM).

The protein belongs to the UbiA prenyltransferase family. Protoheme IX farnesyltransferase subfamily.

The protein resides in the cell inner membrane. The enzyme catalyses heme b + (2E,6E)-farnesyl diphosphate + H2O = Fe(II)-heme o + diphosphate. It participates in porphyrin-containing compound metabolism; heme O biosynthesis; heme O from protoheme: step 1/1. In terms of biological role, converts heme B (protoheme IX) to heme O by substitution of the vinyl group on carbon 2 of heme B porphyrin ring with a hydroxyethyl farnesyl side group. This chain is Protoheme IX farnesyltransferase, found in Rhizobium rhizogenes (strain K84 / ATCC BAA-868) (Agrobacterium radiobacter).